We begin with the raw amino-acid sequence, 274 residues long: MEALRQRIEAAFEARANITPSSVEPGVRADVETVINMLDKGEMRVAEKIDGQWHVNQWLKKAVLLSFRIFDNGVIEGGETKYFDKVPMKFADYDEARFRAEAIRVVPPAAVRKGSFIGKNTVLMPSYVNLGAYVDEGTMVDTWATVGSCAQIGKNVHLSGGVGIGGVLEPLQAGPTIIEDNCFIGARSEIVEGVVVEEGSVISMGVYIGQSTRIYDRETGEIHYGRVPAGSVVVSGTLPSSCGKYNLYAAIIVKKVDEKTRGKVGINELLRIVD.

Residues arginine 104 and aspartate 141 each coordinate substrate.

It belongs to the transferase hexapeptide repeat family. As to quaternary structure, homotrimer.

The protein resides in the cytoplasm. The enzyme catalyses (S)-2,3,4,5-tetrahydrodipicolinate + succinyl-CoA + H2O = (S)-2-succinylamino-6-oxoheptanedioate + CoA. It functions in the pathway amino-acid biosynthesis; L-lysine biosynthesis via DAP pathway; LL-2,6-diaminopimelate from (S)-tetrahydrodipicolinate (succinylase route): step 1/3. In Shewanella amazonensis (strain ATCC BAA-1098 / SB2B), this protein is 2,3,4,5-tetrahydropyridine-2,6-dicarboxylate N-succinyltransferase.